Reading from the N-terminus, the 265-residue chain is Sulfur carrier protein FdhD (265 aa).

The active-site Cysteine persulfide intermediate is the C107.

It belongs to the FdhD family.

The protein resides in the cytoplasm. Its function is as follows. Required for formate dehydrogenase (FDH) activity. Acts as a sulfur carrier protein that transfers sulfur from IscS to the molybdenum cofactor prior to its insertion into FDH. This Staphylococcus aureus (strain bovine RF122 / ET3-1) protein is Sulfur carrier protein FdhD.